The following is a 121-amino-acid chain: Protein MGF 110-5L (121 aa).

The signal sequence occupies residues 1 to 20 (MLVIFLGILGLLANQVSSQL). N-linked (GlcNAc...) asparagine; by host glycosylation is found at asparagine 62 and asparagine 116.

This sequence belongs to the asfivirus MGF 110 family.

In African swine fever virus (isolate Portugal/Lis 57/1957) (ASFV), this protein is Protein MGF 110-5L.